A 65-amino-acid chain; its full sequence is Cold shock-like protein CspC (65 aa).

Residues 3–62 (GRVKWFNAEKGFGFIEREDGDDVFVHFSAIQQDGYKSLEEGQQVEFDIVDGARGPQAANV) enclose the CSD domain.

Homodimer.

The protein resides in the cytoplasm. In Bacillus cereus, this protein is Cold shock-like protein CspC (cspC).